Reading from the N-terminus, the 154-residue chain is 3-hydroxyacyl-[acyl-carrier-protein] dehydratase FabZ (154 aa).

Residue His-54 is part of the active site.

Belongs to the thioester dehydratase family. FabZ subfamily.

Its subcellular location is the cytoplasm. It carries out the reaction a (3R)-hydroxyacyl-[ACP] = a (2E)-enoyl-[ACP] + H2O. Involved in unsaturated fatty acids biosynthesis. Catalyzes the dehydration of short chain beta-hydroxyacyl-ACPs and long chain saturated and unsaturated beta-hydroxyacyl-ACPs. In Shewanella oneidensis (strain ATCC 700550 / JCM 31522 / CIP 106686 / LMG 19005 / NCIMB 14063 / MR-1), this protein is 3-hydroxyacyl-[acyl-carrier-protein] dehydratase FabZ.